A 320-amino-acid polypeptide reads, in one-letter code: Pyrroline-5-carboxylate reductase 2 (320 aa).

An N-acetylserine modification is found at S2. Residues 6–11 (IGAGQL) and S34 contribute to the NADP(+) site. NADPH is bound by residues A8, Q10, L11, S34, E36, N56, V70, K71, and A97. NADP(+) is bound by residues N56, 69–72 (AVKP), and 95–97 (CAA). Residue E164 coordinates L-proline. N230 provides a ligand contact to NADPH. L-proline-binding residues include A237 and T238. Residues 296–305 (TVSTLTPSSP) are compositionally biased toward low complexity. Positions 296–320 (TVSTLTPSSPGKLLTRSLALGGKKD) are disordered. Residue S304 is modified to Phosphoserine.

Belongs to the pyrroline-5-carboxylate reductase family. As to quaternary structure, homodecamer; composed of 5 homodimers. Interacts with LTO1.

The protein resides in the cytoplasm. It localises to the mitochondrion. The enzyme catalyses L-proline + NADP(+) = (S)-1-pyrroline-5-carboxylate + NADPH + 2 H(+). It catalyses the reaction L-proline + NAD(+) = (S)-1-pyrroline-5-carboxylate + NADH + 2 H(+). The protein operates within amino-acid biosynthesis; L-proline biosynthesis; L-proline from L-glutamate 5-semialdehyde: step 1/1. Functionally, oxidoreductase that catalyzes the last step in proline biosynthesis, which corresponds to the reduction of pyrroline-5-carboxylate to L-proline using NAD(P)H. At physiologic concentrations, has higher specific activity in the presence of NADH. Involved in cellular response to oxidative stress. In some cell types, such as erythrocytes, its primary function may be the generation of NADP(+). In Pongo abelii (Sumatran orangutan), this protein is Pyrroline-5-carboxylate reductase 2 (PYCR2).